We begin with the raw amino-acid sequence, 229 residues long: Potassium/proton antiporter CemA (229 aa).

Transmembrane regions (helical) follow at residues 7 to 27 (FTSL…SLSF), 114 to 134 (IICF…LVIL), 145 to 165 (LSDT…IGFH), and 189 to 209 (ILSS…KFWV).

It belongs to the CemA family.

The protein resides in the plastid. It localises to the chloroplast inner membrane. It carries out the reaction K(+)(in) + H(+)(out) = K(+)(out) + H(+)(in). Contributes to K(+)/H(+) antiport activity by supporting proton efflux to control proton extrusion and homeostasis in chloroplasts in a light-dependent manner to modulate photosynthesis. Prevents excessive induction of non-photochemical quenching (NPQ) under continuous-light conditions. Indirectly promotes efficient inorganic carbon uptake into chloroplasts. The polypeptide is Potassium/proton antiporter CemA (Daucus carota (Wild carrot)).